The following is a 485-amino-acid chain: Ribosomal protein uS12 methylthiotransferase RimO (485 aa).

One can recognise an MTTase N-terminal domain in the interval 14–124; the sequence is PKVGFISLGC…VMAHVRELLP (111 aa). 6 residues coordinate [4Fe-4S] cluster: cysteine 23, cysteine 59, cysteine 88, cysteine 167, cysteine 171, and cysteine 174. Residues 153 to 389 form the Radical SAM core domain; sequence LTPRHYAYVK…MEVAQRISRE (237 aa). Residues 392-468 enclose the TRAM domain; sequence AEKVGRVLDV…EYDLYGEVIH (77 aa).

It belongs to the methylthiotransferase family. RimO subfamily. It depends on [4Fe-4S] cluster as a cofactor.

The protein localises to the cytoplasm. It catalyses the reaction L-aspartate(89)-[ribosomal protein uS12]-hydrogen + (sulfur carrier)-SH + AH2 + 2 S-adenosyl-L-methionine = 3-methylsulfanyl-L-aspartate(89)-[ribosomal protein uS12]-hydrogen + (sulfur carrier)-H + 5'-deoxyadenosine + L-methionine + A + S-adenosyl-L-homocysteine + 2 H(+). Its function is as follows. Catalyzes the methylthiolation of an aspartic acid residue of ribosomal protein uS12. This chain is Ribosomal protein uS12 methylthiotransferase RimO, found in Deinococcus geothermalis (strain DSM 11300 / CIP 105573 / AG-3a).